Here is a 237-residue protein sequence, read N- to C-terminus: tRNA (guanine-N(7)-)-methyltransferase (237 aa).

S-adenosyl-L-methionine-binding residues include E68, E93, D120, and D143. The active site involves D143. Substrate is bound by residues K147, D179, and 216–219 (TKFE).

Belongs to the class I-like SAM-binding methyltransferase superfamily. TrmB family.

It carries out the reaction guanosine(46) in tRNA + S-adenosyl-L-methionine = N(7)-methylguanosine(46) in tRNA + S-adenosyl-L-homocysteine. It participates in tRNA modification; N(7)-methylguanine-tRNA biosynthesis. Its function is as follows. Catalyzes the formation of N(7)-methylguanine at position 46 (m7G46) in tRNA. This chain is tRNA (guanine-N(7)-)-methyltransferase, found in Shewanella pealeana (strain ATCC 700345 / ANG-SQ1).